The primary structure comprises 308 residues: D-alanine--D-alanine ligase (308 aa).

Residues 105–302 enclose the ATP-grasp domain; that stretch reads KAIFRSLGLA…FPDLCERILD (198 aa). Residue 133–188 participates in ATP binding; the sequence is DLPFGLPCVVKPAGEGSSVGVHLVNEAAELGPACRDAASHAGDVIVERYVKGTEVD. Mg(2+) contacts are provided by D256, E269, and N271.

The protein belongs to the D-alanine--D-alanine ligase family. The cofactor is Mg(2+). It depends on Mn(2+) as a cofactor.

It localises to the cytoplasm. The enzyme catalyses 2 D-alanine + ATP = D-alanyl-D-alanine + ADP + phosphate + H(+). It functions in the pathway cell wall biogenesis; peptidoglycan biosynthesis. Its function is as follows. Cell wall formation. This chain is D-alanine--D-alanine ligase, found in Anaeromyxobacter sp. (strain K).